A 483-amino-acid polypeptide reads, in one-letter code: Chromosomal replication initiator protein DnaA (483 aa).

A domain I, interacts with DnaA modulators region spans residues 1–71 (MKEFWQTCVS…EALAAEWYQR (71 aa)). The tract at residues 71–145 (RPVQVQFELP…DAANIVYERS (75 aa)) is domain II. Positions 146 to 362 (RLNTDLTFEN…GALRKVLAYA (217 aa)) are domain III, AAA+ region. Gly-190, Gly-192, Lys-193, and Thr-194 together coordinate ATP. Positions 363–483 (RFHGREALNV…LHVLEQTLKG (121 aa)) are domain IV, binds dsDNA.

This sequence belongs to the DnaA family. In terms of assembly, oligomerizes as a right-handed, spiral filament on DNA at oriC.

The protein localises to the cytoplasm. In terms of biological role, plays an essential role in the initiation and regulation of chromosomal replication. ATP-DnaA binds to the origin of replication (oriC) to initiate formation of the DNA replication initiation complex once per cell cycle. Binds the DnaA box (a 9 base pair repeat at the origin) and separates the double-stranded (ds)DNA. Forms a right-handed helical filament on oriC DNA; dsDNA binds to the exterior of the filament while single-stranded (ss)DNA is stabiized in the filament's interior. The ATP-DnaA-oriC complex binds and stabilizes one strand of the AT-rich DNA unwinding element (DUE), permitting loading of DNA polymerase. After initiation quickly degrades to an ADP-DnaA complex that is not apt for DNA replication. Binds acidic phospholipids. In Bordetella avium (strain 197N), this protein is Chromosomal replication initiator protein DnaA.